The chain runs to 384 residues: Methylthioribose-1-phosphate isomerase (384 aa).

The Proton donor role is filled by Asp-255.

This sequence belongs to the eIF-2B alpha/beta/delta subunits family. MtnA subfamily.

It is found in the cytoplasm. Its subcellular location is the nucleus. The enzyme catalyses 5-(methylsulfanyl)-alpha-D-ribose 1-phosphate = 5-(methylsulfanyl)-D-ribulose 1-phosphate. It participates in amino-acid biosynthesis; L-methionine biosynthesis via salvage pathway; L-methionine from S-methyl-5-thio-alpha-D-ribose 1-phosphate: step 1/6. Functionally, catalyzes the interconversion of methylthioribose-1-phosphate (MTR-1-P) into methylthioribulose-1-phosphate (MTRu-1-P). This chain is Methylthioribose-1-phosphate isomerase (mri1), found in Talaromyces marneffei (strain ATCC 18224 / CBS 334.59 / QM 7333) (Penicillium marneffei).